Consider the following 493-residue polypeptide: Probable cytochrome P450 CYP36A1 (493 aa).

Helical transmembrane passes span 1–21 (MLFAQLVILVIIVMLFLCRFA), 60–80 (GGIFTLWLPFPTIVICDYDML), and 290–310 (QLIVAIYDLYSAGMETIIIVL). Residue Cys440 participates in heme binding.

The protein belongs to the cytochrome P450 family. Heme serves as cofactor.

It is found in the membrane. In terms of biological role, cytochromes P450 are a group of heme-thiolate monooxygenases. They oxidize a variety of structurally unrelated compounds, including steroids, fatty acids, and xenobiotics. The sequence is that of Probable cytochrome P450 CYP36A1 (cyp-36A1) from Caenorhabditis elegans.